We begin with the raw amino-acid sequence, 325 residues long: GMP reductase (325 aa).

The Thioimidate intermediate role is filled by Cys-174. Residue 203–226 (LIADGGIRTHGDIAKSIRFGASMV) participates in NADP(+) binding.

It belongs to the IMPDH/GMPR family. GuaC type 2 subfamily.

It catalyses the reaction IMP + NH4(+) + NADP(+) = GMP + NADPH + 2 H(+). Its function is as follows. Catalyzes the irreversible NADPH-dependent deamination of GMP to IMP. It functions in the conversion of nucleobase, nucleoside and nucleotide derivatives of G to A nucleotides, and in maintaining the intracellular balance of A and G nucleotides. The protein is GMP reductase of Staphylococcus aureus (strain NCTC 8325 / PS 47).